The primary structure comprises 153 residues: Prostaglandin E synthase (153 aa).

Residues 1 to 13 are Lumenal-facing; sequence MTSLGLVMENSQV. The helical transmembrane segment at 14–42 threads the bilayer; sequence LPAFLLCSTLLVIKMYAVAVITGQVRLRK. Arg-39 is a binding site for glutathione. Residues 43-61 are Cytoplasmic-facing; that stretch reads KAFANPEDALKRGGLQYCR. The chain crosses the membrane as a helical span at residues 62-91; the sequence is SDPDVERCLRAHRNDMETIYPFLFLGFVYS. Glutathione is bound at residue 74 to 78; that stretch reads RNDME. The Lumenal portion of the chain corresponds to 92–98; it reads FLGPNPL. Residues 99 to 120 form a helical membrane-spanning segment; the sequence is IAWIHFLVVLTGRVVHTVAYLG. Glutathione contacts are provided by His-114 and Tyr-118. At 121–124 the chain is on the cytoplasmic side; that stretch reads KMNP. Residues 125 to 153 form a helical membrane-spanning segment; the sequence is RIRSGAYVLAQFACFSMALQILWEVAHHL. Glutathione is bound at residue 127-131; the sequence is RSGAY.

Belongs to the MAPEG family. Requires glutathione as cofactor.

It is found in the membrane. The protein localises to the cytoplasm. The protein resides in the perinuclear region. The catalysed reaction is prostaglandin H2 = prostaglandin E2. It carries out the reaction 2-glyceryl-prostaglandin H2 = 2-glyceryl-prostaglandin E2. The enzyme catalyses prostaglandin G2 = (15S)-15-hydroperoxy-prostaglandin E2. It catalyses the reaction 1-chloro-2,4-dinitrobenzene + glutathione = 2,4-dinitrophenyl-S-glutathione + chloride + H(+). The catalysed reaction is (5S)-hydroperoxy-(6E,8Z,11Z,14Z)-eicosatetraenoate + 2 glutathione = (5S)-hydroxy-(6E,8Z,11Z,14Z)-eicosatetraenoate + glutathione disulfide + H2O. It participates in lipid metabolism; prostaglandin biosynthesis. Its activity is regulated as follows. Activity is increased following LPS stimulation and down-regulated by the anti-inflammatory glucocorticoid dexamethasone. Terminal enzyme of the cyclooxygenase (COX)-2-mediated prostaglandin E2 (PGE2) biosynthetic pathway. Catalyzes the glutathione-dependent oxidoreduction of prostaglandin endoperoxide H2 (PGH2) to prostaglandin E2 (PGE2) in response to inflammatory stimuli. Plays a key role in inflammation response, fever and pain. Also catalyzes the oxidoreduction of endocannabinoids into prostaglandin glycerol esters and PGG2 into 15-hydroperoxy-PGE2. In addition, displays low glutathione transferase and glutathione-dependent peroxidase activities, toward 1-chloro-2,4-dinitrobenzene and 5-hydroperoxyicosatetraenoic acid (5-HPETE), respectively. This Rattus norvegicus (Rat) protein is Prostaglandin E synthase (Ptges).